A 212-amino-acid chain; its full sequence is Interleukin-6 (212 aa).

Residues 1–27 form the signal peptide; that stretch reads MNSFSTSAFGPVAFSLGLLLVLPAAFP. The cysteines at positions 72 and 78 are disulfide-linked. N-linked (GlcNAc...) asparagine glycosylation occurs at asparagine 73. Position 81 is a phosphoserine (serine 81). Residues cysteine 101 and cysteine 111 are joined by a disulfide bond. Asparagine 172 is a glycosylation site (N-linked (GlcNAc...) asparagine).

This sequence belongs to the IL-6 superfamily. In terms of assembly, component of a hexamer of two molecules each of IL6, IL6R and IL6ST; first binds to IL6R to associate with the signaling subunit IL6ST. Interacts with IL6R (via the N-terminal ectodomain); this interaction may be affected by IL6R-binding with SORL1, hence decreasing IL6 cis signaling. Interacts with SORL1 (via the N-terminal ectodomain); this interaction leads to IL6 internalization and lysosomal degradation. May form a trimeric complex with the soluble SORL1 ectodomain and soluble IL6R receptor; this interaction might stabilize circulating IL6, hence promoting IL6 trans signaling.

Its subcellular location is the secreted. Functionally, cytokine with a wide variety of biological functions in immunity, tissue regeneration, and metabolism. Binds to IL6R, then the complex associates to the signaling subunit IL6ST/gp130 to trigger the intracellular IL6-signaling pathway. The interaction with the membrane-bound IL6R and IL6ST stimulates 'classic signaling', whereas the binding of IL6 and soluble IL6R to IL6ST stimulates 'trans-signaling'. Alternatively, 'cluster signaling' occurs when membrane-bound IL6:IL6R complexes on transmitter cells activate IL6ST receptors on neighboring receiver cells. IL6 is a potent inducer of the acute phase response. Rapid production of IL6 contributes to host defense during infection and tissue injury, but excessive IL6 synthesis is involved in disease pathology. In the innate immune response, is synthesized by myeloid cells, such as macrophages and dendritic cells, upon recognition of pathogens through toll-like receptors (TLRs) at the site of infection or tissue injury. In the adaptive immune response, is required for the differentiation of B cells into immunoglobulin-secreting cells. Plays a major role in the differentiation of CD4(+) T cell subsets. Essential factor for the development of T follicular helper (Tfh) cells that are required for the induction of germinal-center formation. Required to drive naive CD4(+) T cells to the Th17 lineage. Also required for proliferation of myeloma cells and the survival of plasmablast cells. In terms of biological role, acts as an essential factor in bone homeostasis and on vessels directly or indirectly by induction of VEGF, resulting in increased angiogenesis activity and vascular permeability. Induces, through 'trans-signaling' and synergistically with IL1B and TNF, the production of VEGF. Involved in metabolic controls, is discharged into the bloodstream after muscle contraction increasing lipolysis and improving insulin resistance. 'Trans-signaling' in central nervous system also regulates energy and glucose homeostasis. Mediates, through GLP-1, crosstalk between insulin-sensitive tissues, intestinal L cells and pancreatic islets to adapt to changes in insulin demand. Also acts as a myokine. Plays a protective role during liver injury, being required for maintenance of tissue regeneration. Also has a pivotal role in iron metabolism by regulating HAMP/hepcidin expression upon inflammation or bacterial infection. Through activation of IL6ST-YAP-NOTCH pathway, induces inflammation-induced epithelial regeneration. This Macaca mulatta (Rhesus macaque) protein is Interleukin-6 (IL6).